The sequence spans 301 residues: Transcription factor bHLH103 (301 aa).

A KRAB domain is found at 29-106 (PRSAEIVVDF…LEGLFDSSEQ (78 aa)). Disordered regions lie at residues 161–184 (EKSG…ETPS) and 239–272 (TSPH…PRQD). The bHLH domain occupies 180-229 (LETPSHFPSFKVRKEKLGDRITALQQLVSPFGKTDTASVLHDAIDYIKFL). Over residues 239 to 269 (TSPHLNSIGSGEQKQWSDKSSNNTHNQNCSP) the composition is skewed to polar residues.

Homodimer. Mature root endodermis.

The protein localises to the nucleus. The sequence is that of Transcription factor bHLH103 (BHLH103) from Arabidopsis thaliana (Mouse-ear cress).